A 413-amino-acid polypeptide reads, in one-letter code: Arginine biosynthesis bifunctional protein ArgJ (413 aa).

T158, K184, T195, E285, N408, and S413 together coordinate substrate. T195 serves as the catalytic Nucleophile.

Belongs to the ArgJ family. As to quaternary structure, heterotetramer of two alpha and two beta chains.

It localises to the cytoplasm. It carries out the reaction N(2)-acetyl-L-ornithine + L-glutamate = N-acetyl-L-glutamate + L-ornithine. The catalysed reaction is L-glutamate + acetyl-CoA = N-acetyl-L-glutamate + CoA + H(+). The protein operates within amino-acid biosynthesis; L-arginine biosynthesis; L-ornithine and N-acetyl-L-glutamate from L-glutamate and N(2)-acetyl-L-ornithine (cyclic): step 1/1. It functions in the pathway amino-acid biosynthesis; L-arginine biosynthesis; N(2)-acetyl-L-ornithine from L-glutamate: step 1/4. Functionally, catalyzes two activities which are involved in the cyclic version of arginine biosynthesis: the synthesis of N-acetylglutamate from glutamate and acetyl-CoA as the acetyl donor, and of ornithine by transacetylation between N(2)-acetylornithine and glutamate. This chain is Arginine biosynthesis bifunctional protein ArgJ, found in Agrobacterium fabrum (strain C58 / ATCC 33970) (Agrobacterium tumefaciens (strain C58)).